A 75-amino-acid polypeptide reads, in one-letter code: ATP synthase subunit c (75 aa).

Helical transmembrane passes span Leu-13–Ile-33 and Met-54–Ile-74.

This sequence belongs to the ATPase C chain family. In terms of assembly, F-type ATPases have 2 components, F(1) - the catalytic core - and F(0) - the membrane proton channel. F(1) has five subunits: alpha(3), beta(3), gamma(1), delta(1), epsilon(1). F(0) has three main subunits: a(1), b(2) and c(10-14). The alpha and beta chains form an alternating ring which encloses part of the gamma chain. F(1) is attached to F(0) by a central stalk formed by the gamma and epsilon chains, while a peripheral stalk is formed by the delta and b chains.

The protein resides in the cell membrane. In terms of biological role, f(1)F(0) ATP synthase produces ATP from ADP in the presence of a proton or sodium gradient. F-type ATPases consist of two structural domains, F(1) containing the extramembraneous catalytic core and F(0) containing the membrane proton channel, linked together by a central stalk and a peripheral stalk. During catalysis, ATP synthesis in the catalytic domain of F(1) is coupled via a rotary mechanism of the central stalk subunits to proton translocation. Key component of the F(0) channel; it plays a direct role in translocation across the membrane. A homomeric c-ring of between 10-14 subunits forms the central stalk rotor element with the F(1) delta and epsilon subunits. In Bifidobacterium adolescentis (strain ATCC 15703 / DSM 20083 / NCTC 11814 / E194a), this protein is ATP synthase subunit c.